A 1170-amino-acid polypeptide reads, in one-letter code: DNA-directed RNA polymerase subunit beta' (1170 aa).

Zn(2+)-binding residues include C60, C62, C75, and C78. Mg(2+) is bound by residues D449, D451, and D453. Residues C774, C848, C855, and C858 each coordinate Zn(2+). Positions 1145–1170 (EPGEENGEPGGERLYGMDELYGETAN) are disordered.

It belongs to the RNA polymerase beta' chain family. The RNAP catalytic core consists of 2 alpha, 1 beta, 1 beta' and 1 omega subunit. When a sigma factor is associated with the core the holoenzyme is formed, which can initiate transcription. Mg(2+) is required as a cofactor. Requires Zn(2+) as cofactor.

It carries out the reaction RNA(n) + a ribonucleoside 5'-triphosphate = RNA(n+1) + diphosphate. DNA-dependent RNA polymerase catalyzes the transcription of DNA into RNA using the four ribonucleoside triphosphates as substrates. The chain is DNA-directed RNA polymerase subunit beta' from Pelotomaculum thermopropionicum (strain DSM 13744 / JCM 10971 / SI).